Reading from the N-terminus, the 68-residue chain is UPF0434 protein BURPS668_0926 (68 aa).

It belongs to the UPF0434 family.

This is UPF0434 protein BURPS668_0926 from Burkholderia pseudomallei (strain 668).